Consider the following 221-residue polypeptide: Ribosomal RNA large subunit methyltransferase E (221 aa).

Gly-72, Trp-74, Asp-91, Asp-107, and Asp-131 together coordinate S-adenosyl-L-methionine. Catalysis depends on Lys-171, which acts as the Proton acceptor.

This sequence belongs to the class I-like SAM-binding methyltransferase superfamily. RNA methyltransferase RlmE family.

The protein localises to the cytoplasm. The enzyme catalyses uridine(2552) in 23S rRNA + S-adenosyl-L-methionine = 2'-O-methyluridine(2552) in 23S rRNA + S-adenosyl-L-homocysteine + H(+). Functionally, specifically methylates the uridine in position 2552 of 23S rRNA at the 2'-O position of the ribose in the fully assembled 50S ribosomal subunit. The protein is Ribosomal RNA large subunit methyltransferase E of Zymomonas mobilis subsp. mobilis (strain ATCC 31821 / ZM4 / CP4).